A 341-amino-acid polypeptide reads, in one-letter code: Protein BIG GRAIN 1-like C (341 aa).

Disordered stretches follow at residues 28-61 (DGLQ…LTTL) and 76-138 (SSTT…SDDD). Residues 52 to 61 (NKKDDKLTTL) are compositionally biased toward basic and acidic residues. The segment covering 76-92 (SSTTTTNSSDSSSFSSS) has biased composition (low complexity). A compositionally biased stretch (basic and acidic residues) spans 105-138 (KLAEQGKRSGDERQRTKRTVMDNDSRLFSKSDDD).

The protein belongs to the BIG GRAIN 1 (BG1) plant protein family.

The protein localises to the cell membrane. In terms of biological role, involved in auxin transport. Regulator of the auxin signaling pathway. The sequence is that of Protein BIG GRAIN 1-like C from Arabidopsis thaliana (Mouse-ear cress).